A 359-amino-acid chain; its full sequence is Archaemetzincin-2 (359 aa).

Residue H254 coordinates Zn(2+). The Proton acceptor role is filled by E255. Zn(2+) contacts are provided by H258, H264, C265, C270, C289, and C292.

The protein belongs to the peptidase M54 family. Zn(2+) serves as cofactor. Predominantly expressed in testis.

Its function is as follows. Probable zinc metalloprotease. The sequence is that of Archaemetzincin-2 (Amz2) from Mus musculus (Mouse).